We begin with the raw amino-acid sequence, 122 residues long: MRKSYRVKTERDFQKVFKEGQSMANRGFVVYTLPKENQKHFRVGISVGKKVGHTAVARNRLKRFIRATLTELKPEIRPDLDFLVIARPYARDFDMGRTKKNLIHVLRLAKVLSSEETEIEEK.

It belongs to the RnpA family. Consists of a catalytic RNA component (M1 or rnpB) and a protein subunit.

It catalyses the reaction Endonucleolytic cleavage of RNA, removing 5'-extranucleotides from tRNA precursor.. Its function is as follows. RNaseP catalyzes the removal of the 5'-leader sequence from pre-tRNA to produce the mature 5'-terminus. It can also cleave other RNA substrates such as 4.5S RNA. The protein component plays an auxiliary but essential role in vivo by binding to the 5'-leader sequence and broadening the substrate specificity of the ribozyme. The sequence is that of Ribonuclease P protein component from Lactobacillus johnsonii (strain CNCM I-12250 / La1 / NCC 533).